Consider the following 369-residue polypeptide: DNA replication and repair protein RecF (369 aa).

ATP is bound at residue 30–37 (GRNAQGKT).

It belongs to the RecF family.

The protein resides in the cytoplasm. Its function is as follows. The RecF protein is involved in DNA metabolism; it is required for DNA replication and normal SOS inducibility. RecF binds preferentially to single-stranded, linear DNA. It also seems to bind ATP. The protein is DNA replication and repair protein RecF of Streptococcus agalactiae serotype III (strain NEM316).